We begin with the raw amino-acid sequence, 293 residues long: Vibriobactin-specific isochorismatase (293 aa).

One can recognise a Carrier domain in the interval 211-287 (KLTGLSLRTM…QWWQTIQANL (77 aa)). An O-(pantetheine 4'-phosphoryl)serine modification is found at Ser248.

Belongs to the isochorismatase family. The cofactor is pantetheine 4'-phosphate.

The catalysed reaction is isochorismate + H2O = (2S,3S)-2,3-dihydroxy-2,3-dihydrobenzoate + pyruvate. The protein operates within siderophore biosynthesis; vibriobactin biosynthesis. Functionally, involved in the biosynthesis of the catechol siderophore vibriobactin. Vibriobactin is a chelating compound involved in transporting iron from the bacterial environment into the cell cytoplasm. The polypeptide is Vibriobactin-specific isochorismatase (vibB) (Vibrio cholerae serotype O1 (strain ATCC 39541 / Classical Ogawa 395 / O395)).